The sequence spans 108 residues: MPKPGILKSKSMFCVIYRSSKRDQTYLYVEKKDDFSRVPEELMKGFGQPQLAMILPLDGRKKLVNADIEKVKQALTEQGYYLQLPPPPEDLLKQHLSVMGQKTDDTNK.

Residues 12-96 (MFCVIYRSSK…PPEDLLKQHL (85 aa)) form the YcgL domain.

This is Protein YcgL from Escherichia coli (strain K12 / MC4100 / BW2952).